The following is a 287-amino-acid chain: Phosphoribosylaminoimidazole-succinocarboxamide synthase (287 aa).

This sequence belongs to the SAICAR synthetase family.

The enzyme catalyses 5-amino-1-(5-phospho-D-ribosyl)imidazole-4-carboxylate + L-aspartate + ATP = (2S)-2-[5-amino-1-(5-phospho-beta-D-ribosyl)imidazole-4-carboxamido]succinate + ADP + phosphate + 2 H(+). The protein operates within purine metabolism; IMP biosynthesis via de novo pathway; 5-amino-1-(5-phospho-D-ribosyl)imidazole-4-carboxamide from 5-amino-1-(5-phospho-D-ribosyl)imidazole-4-carboxylate: step 1/2. This Neisseria meningitidis serogroup A / serotype 4A (strain DSM 15465 / Z2491) protein is Phosphoribosylaminoimidazole-succinocarboxamide synthase.